The following is a 228-amino-acid chain: Ribonuclease 3 (228 aa).

The RNase III domain maps to 2–130 (LTYLEQKINY…LLAAVYLDGG (129 aa)). A Mg(2+)-binding site is contributed by Glu43. Asp47 is an active-site residue. Mg(2+)-binding residues include Asp116 and Glu119. Residue Glu119 is part of the active site. A DRBM domain is found at 157-226 (DYKTRLQEVV…AMEALSKLGI (70 aa)).

This sequence belongs to the ribonuclease III family. In terms of assembly, homodimer. It depends on Mg(2+) as a cofactor.

The protein localises to the cytoplasm. It catalyses the reaction Endonucleolytic cleavage to 5'-phosphomonoester.. In terms of biological role, digests double-stranded RNA. Involved in the processing of primary rRNA transcript to yield the immediate precursors to the large and small rRNAs (23S and 16S). Processes some mRNAs, and tRNAs when they are encoded in the rRNA operon. Processes pre-crRNA and tracrRNA of type II CRISPR loci if present in the organism. This Caldanaerobacter subterraneus subsp. tengcongensis (strain DSM 15242 / JCM 11007 / NBRC 100824 / MB4) (Thermoanaerobacter tengcongensis) protein is Ribonuclease 3.